Reading from the N-terminus, the 804-residue chain is Probable copper-exporting P-type ATPase (804 aa).

At 1 to 101 (MVKDTYISSA…VEHLSRMKRK (101 aa)) the chain is on the cytoplasmic side. The region spanning 16-82 (MERTVRVTGM…VIEDLGYGVV (67 aa)) is the HMA 1 domain. Positions 27 and 30 each coordinate Cu(+). The chain crosses the membrane as a helical span at residues 102–122 (LYVAAFAGVLLLFLAHFISLP). Residues 123–128 (YEDFVQ) lie on the Extracellular side of the membrane. A helical transmembrane segment spans residues 129 to 149 (LLIALPAIFYSGSSIFKAAFS). At 150–159 (ALRRRTLNMD) the chain is on the cytoplasmic side. A helical transmembrane segment spans residues 160-180 (VMYSMGVGAAFLASVLSTAGV). Residues 181-186 (LPREYS) lie on the Extracellular side of the membrane. A helical transmembrane segment spans residues 187–204 (FYETSVLLLAFLLLGRTL). The Cytoplasmic segment spans residues 205-339 (EARAKSRTGE…PIQRLADKVV (135 aa)). A helical transmembrane segment spans residues 340–360 (AYFIPTVLLVAISAFIYWYFI). At 361–364 (AHAP) the chain is on the extracellular side. A helical transmembrane segment spans residues 365–385 (LLFAFTTLIAVLVVACPCAFG). The Cytoplasmic portion of the chain corresponds to 386–680 (LATPTALTVG…KIKQNIFWAL (295 aa)). The active-site 4-aspartylphosphate intermediate is the aspartate 424. ATP-binding positions include 457–462 (ERRSEH) and 490–501 (GEGVVADGILVG). Aspartate 618 and aspartate 622 together coordinate Mg(2+). Residues 681-701 (IYNVILIPAAAGLLYPIFGVV) traverse the membrane as a helical segment. Over 702 to 704 (FRP) the chain is Extracellular. The helical transmembrane segment at 705–725 (EFAGLAMAMSSVSVVANSLLL) threads the bilayer. Over 726 to 804 (RNYVPPIRRG…AAGYQAKLRS (79 aa)) the chain is Cytoplasmic. Residues 740 to 801 (EKIVLELSGL…AVEAAGYQAK (62 aa)) form the HMA 2 domain. Residues cysteine 751 and cysteine 754 each contribute to the Cu(+) site.

This sequence belongs to the cation transport ATPase (P-type) (TC 3.A.3) family. Type IB subfamily. Interacts with CopZ probably in the CopZ Cu(+)-bound form.

The protein resides in the cell membrane. It catalyses the reaction Cu(+)(in) + ATP + H2O = Cu(+)(out) + ADP + phosphate + H(+). Its activity is regulated as follows. Activated by Cu(+) and Ag(+) and inhibited by vanadate. Activated by CopZ in its Cu(+)-bound form. Its function is as follows. Probably involved in copper and silver export. This Archaeoglobus fulgidus (strain ATCC 49558 / DSM 4304 / JCM 9628 / NBRC 100126 / VC-16) protein is Probable copper-exporting P-type ATPase (copA).